The primary structure comprises 185 residues: Probable chorismate pyruvate-lyase (185 aa).

The substrate site is built by Arg-75, Leu-113, and Glu-174.

Belongs to the UbiC family.

It is found in the cytoplasm. It catalyses the reaction chorismate = 4-hydroxybenzoate + pyruvate. It functions in the pathway cofactor biosynthesis; ubiquinone biosynthesis. Removes the pyruvyl group from chorismate, with concomitant aromatization of the ring, to provide 4-hydroxybenzoate (4HB) for the ubiquinone pathway. In Aromatoleum aromaticum (strain DSM 19018 / LMG 30748 / EbN1) (Azoarcus sp. (strain EbN1)), this protein is Probable chorismate pyruvate-lyase.